Here is a 490-residue protein sequence, read N- to C-terminus: tRNA-guanine(15) transglycosylase (490 aa).

The Nucleophile role is filled by Asp-90. The substrate site is built by Asp-125 and Ala-193. Cys-276, Cys-278, and Cys-281 together coordinate Zn(2+).

It belongs to the archaeosine tRNA-ribosyltransferase family. The cofactor is Zn(2+).

It carries out the reaction guanosine(15) in tRNA + 7-cyano-7-deazaguanine = 7-cyano-7-carbaguanosine(15) in tRNA + guanine. It participates in tRNA modification; archaeosine-tRNA biosynthesis. Exchanges the guanine residue with 7-cyano-7-deazaguanine (preQ0) at position 15 in the dihydrouridine loop (D-loop) of archaeal tRNAs. The polypeptide is tRNA-guanine(15) transglycosylase (Methanosarcina barkeri (strain Fusaro / DSM 804)).